A 1342-amino-acid polypeptide reads, in one-letter code: DNA-directed RNA polymerase subunit beta (1342 aa).

The protein belongs to the RNA polymerase beta chain family. In terms of assembly, the RNAP catalytic core consists of 2 alpha, 1 beta, 1 beta' and 1 omega subunit. When a sigma factor is associated with the core the holoenzyme is formed, which can initiate transcription.

The enzyme catalyses RNA(n) + a ribonucleoside 5'-triphosphate = RNA(n+1) + diphosphate. Its function is as follows. DNA-dependent RNA polymerase catalyzes the transcription of DNA into RNA using the four ribonucleoside triphosphates as substrates. The chain is DNA-directed RNA polymerase subunit beta from Pectobacterium carotovorum subsp. carotovorum (strain PC1).